Reading from the N-terminus, the 368-residue chain is Phospho-N-acetylmuramoyl-pentapeptide-transferase (368 aa).

Helical transmembrane passes span 30–50 (AAAI…IKYL), 72–92 (LPTM…LLWS), 95–115 (IDPH…IGFI), 139–159 (VTLG…SVLL), 169–189 (YLTI…ITAV), 208–228 (AIVV…VYAV), 238–258 (GGEI…FLWF), 264–286 (EIIM…ALLI), and 345–365 (KIVI…LMTL).

The protein belongs to the glycosyltransferase 4 family. MraY subfamily. Mg(2+) serves as cofactor.

It localises to the cell inner membrane. It carries out the reaction UDP-N-acetyl-alpha-D-muramoyl-L-alanyl-gamma-D-glutamyl-meso-2,6-diaminopimeloyl-D-alanyl-D-alanine + di-trans,octa-cis-undecaprenyl phosphate = di-trans,octa-cis-undecaprenyl diphospho-N-acetyl-alpha-D-muramoyl-L-alanyl-D-glutamyl-meso-2,6-diaminopimeloyl-D-alanyl-D-alanine + UMP. It participates in cell wall biogenesis; peptidoglycan biosynthesis. In terms of biological role, catalyzes the initial step of the lipid cycle reactions in the biosynthesis of the cell wall peptidoglycan: transfers peptidoglycan precursor phospho-MurNAc-pentapeptide from UDP-MurNAc-pentapeptide onto the lipid carrier undecaprenyl phosphate, yielding undecaprenyl-pyrophosphoryl-MurNAc-pentapeptide, known as lipid I. This Pelodictyon phaeoclathratiforme (strain DSM 5477 / BU-1) protein is Phospho-N-acetylmuramoyl-pentapeptide-transferase.